The sequence spans 536 residues: Chaperonin GroEL (536 aa).

Residues 29–32 (TLGP), 86–90 (DGTTT), glycine 413, and aspartate 494 contribute to the ATP site.

Belongs to the chaperonin (HSP60) family. Forms a cylinder of 14 subunits composed of two heptameric rings stacked back-to-back. Interacts with the co-chaperonin GroES.

It localises to the cytoplasm. It carries out the reaction ATP + H2O + a folded polypeptide = ADP + phosphate + an unfolded polypeptide.. In terms of biological role, together with its co-chaperonin GroES, plays an essential role in assisting protein folding. The GroEL-GroES system forms a nano-cage that allows encapsulation of the non-native substrate proteins and provides a physical environment optimized to promote and accelerate protein folding. This chain is Chaperonin GroEL, found in Acholeplasma laidlawii (strain PG-8A).